The following is a 211-amino-acid chain: Lipoprotein signal peptidase (211 aa).

The next 3 membrane-spanning stretches (helical) occupy residues 12-32 (LLAL…YLAV), 96-116 (AFRN…ILHY), and 127-147 (LQVA…DRLA). Catalysis depends on residues Asp-153 and Asp-174. Residues 167–187 (WPTFNIADSLIVVGVALLVLH) form a helical membrane-spanning segment.

The protein belongs to the peptidase A8 family.

It is found in the cell inner membrane. It carries out the reaction Release of signal peptides from bacterial membrane prolipoproteins. Hydrolyzes -Xaa-Yaa-Zaa-|-(S,diacylglyceryl)Cys-, in which Xaa is hydrophobic (preferably Leu), and Yaa (Ala or Ser) and Zaa (Gly or Ala) have small, neutral side chains.. The protein operates within protein modification; lipoprotein biosynthesis (signal peptide cleavage). Functionally, this protein specifically catalyzes the removal of signal peptides from prolipoproteins. The polypeptide is Lipoprotein signal peptidase (Anaeromyxobacter sp. (strain Fw109-5)).